Reading from the N-terminus, the 539-residue chain is CTP synthase (539 aa).

An amidoligase domain region spans residues 1–268; the sequence is MADTKYIFVT…DETVLRKVGL (268 aa). Ser-15 serves as a coordination point for CTP. UTP is bound at residue Ser-15. Position 16–21 (16–21) interacts with ATP; the sequence is SLGKGI. An L-glutamine-binding site is contributed by Tyr-56. Asp-73 contacts ATP. Mg(2+)-binding residues include Asp-73 and Glu-143. Residues 150–152, 189–194, and Lys-225 contribute to the CTP site; these read DIE and KTKPTQ. UTP-binding positions include 189-194 and Lys-225; that span reads KTKPTQ. The Glutamine amidotransferase type-1 domain maps to 294–536; it reads TIALVGKYVE…IREAIKTRKK (243 aa). Residue Gly-356 participates in L-glutamine binding. The active-site Nucleophile; for glutamine hydrolysis is Cys-383. L-glutamine-binding positions include 384 to 387, Glu-407, and Arg-464; that span reads LGMQ. Residues His-509 and Glu-511 contribute to the active site.

It belongs to the CTP synthase family. As to quaternary structure, homotetramer.

The enzyme catalyses UTP + L-glutamine + ATP + H2O = CTP + L-glutamate + ADP + phosphate + 2 H(+). The catalysed reaction is L-glutamine + H2O = L-glutamate + NH4(+). It carries out the reaction UTP + NH4(+) + ATP = CTP + ADP + phosphate + 2 H(+). It participates in pyrimidine metabolism; CTP biosynthesis via de novo pathway; CTP from UDP: step 2/2. Its activity is regulated as follows. Allosterically activated by GTP, when glutamine is the substrate; GTP has no effect on the reaction when ammonia is the substrate. The allosteric effector GTP functions by stabilizing the protein conformation that binds the tetrahedral intermediate(s) formed during glutamine hydrolysis. Inhibited by the product CTP, via allosteric rather than competitive inhibition. Its function is as follows. Catalyzes the ATP-dependent amination of UTP to CTP with either L-glutamine or ammonia as the source of nitrogen. Regulates intracellular CTP levels through interactions with the four ribonucleotide triphosphates. The protein is CTP synthase of Porphyromonas gingivalis (strain ATCC 33277 / DSM 20709 / CIP 103683 / JCM 12257 / NCTC 11834 / 2561).